The sequence spans 257 residues: 24 kDa outer membrane protein (257 aa).

An N-terminal signal peptide occupies residues 1 to 21; that stretch reads MKNKSKLLACCLMALPISSFS.

The protein belongs to the MipA/OmpV family.

The protein resides in the cell outer membrane. The protein is 24 kDa outer membrane protein of Pasteurella multocida (strain Pm70).